The primary structure comprises 500 residues: Zinc finger protein 689 (500 aa).

Positions 1–24 are disordered; it reads MAPPSAPLLEQAPGEVGPTRRRGR. A KRAB domain is found at 29–100; that stretch reads LKFADVAVYF…AALDPQEYRR (72 aa). The interval 110 to 144 is disordered; the sequence is TRQKNEEKEVFPPKDVPRKGKRGRKPSKPRLIARQ. Residues 112-127 are compositionally biased toward basic and acidic residues; that stretch reads QKNEEKEVFPPKDVPR. The segment covering 128-137 has biased composition (basic residues); sequence KGKRGRKPSK. Residues 149-171 form a C2H2-type 1; degenerate zinc finger; it reads PICPDCGCTFPDLPALESHKCAQ. 10 C2H2-type zinc fingers span residues 177-199, 205-227, 233-255, 261-283, 289-311, 317-339, 345-367, 373-395, 401-423, and 429-451; these read YPCPDCGRRFSYPSLLVSHRRAH, YVCDQCGKRFSQRKNLSQHQVIH, YHCPDCGRCFRRSRSLANHRTTH, HQCPSCGRRFAYPSLLAIHQRTH, YTCLECSRRFRQRTALVIHQRIH, YPCPDCERRFSSSSRLVSHRRVH, YACEHCEARFSQRSTLLQHQLLH, YPCPDCGRAFRRSGSLAIHRSTH, HACDDCGRRFAYPSLLASHRRVH, and YACDLCSKRFAQWSHLAQHQLLH. Residue K455 forms a Glycyl lysine isopeptide (Lys-Gly) (interchain with G-Cter in SUMO2) linkage. The segment at 457-482 adopts a C2H2-type 12 zinc-finger fold; that stretch reads FPCLECGRCFRQRWSLAVHKCCPNTH.

This sequence belongs to the krueppel C2H2-type zinc-finger protein family.

It is found in the nucleus. Its function is as follows. May be involved in transcriptional regulation. This chain is Zinc finger protein 689 (Znf689), found in Rattus norvegicus (Rat).